The chain runs to 315 residues: C1GALT1-specific chaperone 1-like protein (315 aa).

Topologically, residues 1 to 8 (MVSASGTS) are cytoplasmic. The chain crosses the membrane as a helical; Signal-anchor for type II membrane protein span at residues 9 to 29 (FFKGMLLGSISWVLITMFGQI). Topologically, residues 30-315 (HIRHRGQTQD…FLPPVGSEND (286 aa)) are lumenal. Residues asparagine 55 and asparagine 301 are each glycosylated (N-linked (GlcNAc...) asparagine).

It belongs to the glycosyltransferase 31 family. Beta3-Gal-T subfamily.

It is found in the membrane. The polypeptide is C1GALT1-specific chaperone 1-like protein (Homo sapiens (Human)).